The primary structure comprises 598 residues: Nuclear receptor subfamily 4 group A member 1 (598 aa).

Disordered regions lie at residues 1-43 and 128-151; these read MPCI…PEAA and GSDY…PPQL. Low complexity predominate over residues 134–145; it reads SPCSAPSPSTPS. Positions 171-466 are required for nuclear import; sequence RAWTEQLPKA…PAEGKLIFCS (296 aa). The segment at residues 264–339 is a DNA-binding region (nuclear receptor); the sequence is EGRCAVCGDN…VGMVKEVVRT (76 aa). NR C4-type zinc fingers lie at residues 267 to 287 and 303 to 327; these read CAVC…CEGC and CLAN…FQKC. Positions 268-354 are required for binding NBRE-containing DNA; that stretch reads AVCGDNASCQ…RRGRLPSKPK (87 aa). Residues 299–361 are required for the interaction with RXRA; sequence AKYICLANKD…KPKQPPETSP (63 aa). Ser341 carries the phosphoserine; by PKA modification. A disordered region spans residues 341-361; that stretch reads SLKGRRGRLPSKPKQPPETSP. At Ser351 the chain carries Phosphoserine; by PKA, RPS6KA1 and RPS6KA3. The region spanning 360–595 is the NR LBD domain; it reads SPAHLLTSLV…PIVDKIFMDT (236 aa). Positions 521 to 544 are binds lipopolysaccharide; that stretch reads PRRVEELQNRIASCLKEHVSAEAG. The AF-2 stretch occupies residues 584 to 595; that stretch reads PPPIVDKIFMDT.

The protein belongs to the nuclear hormone receptor family. NR4 subfamily. In terms of assembly, binds the NGFI-B response element (NBRE) as a monomer. Binds the Nur response element (NurRE), consisting of two inverse NBRE-related octanucleotide repeats separated by 6 base-pairs, as a dimer. Interacts (via N-terminus) with NLRP3 (via LRR repeat domain); the interaction is direct, requires binding of NR4A1/Nur77 to NBRE-containing dsDNA and lipopolysaccharide, and leads to non-canonical NLRP3 inflammasome activation. Interacts with GADD45GIP1. Interacts with STK11. Interacts with IFI27. Heterodimer (via DNA-binding domain) with RXRA (via C-terminus); DNA-binding of the heterodimer is enhanced by 9-cis retinoic acid. Competes for the RXRA interaction with EP300 and thereby attenuates EP300 mediated acetylation of RXRA. Interacts with NCOA1. Interacts with NCOA2. Interacts with NCOA3. Zn(2+) serves as cofactor. Phosphorylated at Ser-351 by RPS6KA1 and RPS6KA3 in response to mitogenic or stress stimuli. Post-translationally, acetylated by p300/CBP, acetylation increases stability. Deacetylated by HDAC1.

The protein resides in the nucleus. It is found in the cytoplasm. It localises to the cytosol. The protein localises to the mitochondrion. In terms of biological role, orphan nuclear receptor. Binds the NGFI-B response element (NBRE) 5'-AAAGGTCA-3'. Binds 9-cis-retinoic acid outside of its ligand-binding (NR LBD) domain. Participates in energy homeostasis by sequestrating the kinase STK11 in the nucleus, thereby attenuating cytoplasmic AMPK activation. Regulates the inflammatory response in macrophages by regulating metabolic adaptations during inflammation, including repressing the transcription of genes involved in the citric acid cycle (TCA). Inhibits NF-kappa-B signaling by binding to low-affinity NF-kappa-B binding sites, such as at the IL2 promoter. May act concomitantly with NR4A2 in regulating the expression of delayed-early genes during liver regeneration. Plays a role in the vascular response to injury. Its function is as follows. In the cytosol, upon its detection of both bacterial lipopolysaccharide (LPS) and NBRE-containing mitochondrial DNA released by GSDMD pores during pyroptosis, it promotes non-canonical NLRP3 inflammasome activation by stimulating association of NLRP3 and NEK7. This chain is Nuclear receptor subfamily 4 group A member 1 (NR4A1), found in Bos taurus (Bovine).